Reading from the N-terminus, the 318-residue chain is TPR repeat-containing protein MJ0940 (318 aa).

8 TPR repeats span residues 17–50, 84–117, 119–151, 152–185, 186–219, 221–254, 255–288, and 289–318; these read SLTYLIKSYEYRDRGNLLESLYYLDKALELNPDF, PVAYALLGQLYELLGNFDNALECYEKSLGIEEKF, TAFFLKVLCLGLSGKYDELLKCCDRLISFAPNF, IPAYIIKANMLRKLGRYEEALACVNKVLELKEND, TNAIYLKALILNRIGNCDEALKYYEKLIDELNVT, IEVIREAIYLSFLFNKLDKAEKYIEMGLKLRPDD, ASLWYFKGKLYEKQNKFEEALKYYNKAIQLMPHH, and TKALLAKARVLEKLGRIEESIECYNKALDR.

The chain is TPR repeat-containing protein MJ0940 from Methanocaldococcus jannaschii (strain ATCC 43067 / DSM 2661 / JAL-1 / JCM 10045 / NBRC 100440) (Methanococcus jannaschii).